We begin with the raw amino-acid sequence, 430 residues long: Aspartate aminotransferase, mitochondrial (430 aa).

The N-terminal 29 residues, 1–29 (MALLHSGRVLPGIAAAFHPGLAAAASARA), are a transit peptide targeting the mitochondrion. T48 is modified (phosphothreonine). Position 59 is an N6-acetyllysine (K59). G65 contacts substrate. At K73 the chain carries N6-acetyllysine; alternate. K73 carries the N6-succinyllysine; alternate modification. K82 carries the N6-acetyllysine modification. K90 is subject to N6-acetyllysine; alternate. Residue K90 is modified to N6-succinyllysine; alternate. Position 96 is a 3'-nitrotyrosine; alternate (Y96). At Y96 the chain carries Phosphotyrosine; alternate. An N6-acetyllysine; alternate mark is found at K107 and K122. Residues K107 and K122 each carry the N6-succinyllysine; alternate modification. S143 is modified (phosphoserine). K159 carries the post-translational modification N6-acetyllysine; alternate. Residue K159 is modified to N6-succinyllysine; alternate. W162 lines the substrate pocket. K185 carries the post-translational modification N6-acetyllysine; alternate. N6-succinyllysine; alternate is present on K185. A substrate-binding site is contributed by N215. K227 bears the N6-succinyllysine mark. An N6-acetyllysine modification is found at K234. An N6-acetyllysine; alternate mark is found at K279 and K296. K279 bears the N6-(pyridoxal phosphate)lysine; alternate mark. Residue K296 is modified to N6-succinyllysine; alternate. K302 carries the post-translational modification N6-acetyllysine. N6-acetyllysine; alternate is present on K309. N6-succinyllysine; alternate is present on K309. Asymmetric dimethylarginine is present on R313. T333 bears the Phosphothreonine mark. Position 338 is an N6-acetyllysine; alternate (K338). K338 carries the post-translational modification N6-succinyllysine; alternate. K345 bears the N6-acetyllysine mark. K363 carries the post-translational modification N6-acetyllysine; alternate. The residue at position 363 (K363) is an N6-succinyllysine; alternate. K364 and K387 each carry N6-acetyllysine. Residues K396 and K404 each carry the N6-acetyllysine; alternate modification. N6-succinyllysine; alternate is present on residues K396 and K404. R407 contacts substrate.

The protein belongs to the class-I pyridoxal-phosphate-dependent aminotransferase family. As to quaternary structure, homodimer. Pyridoxal 5'-phosphate serves as cofactor.

It is found in the mitochondrion matrix. The protein resides in the cell membrane. It carries out the reaction L-aspartate + 2-oxoglutarate = oxaloacetate + L-glutamate. The enzyme catalyses L-kynurenine + 2-oxoglutarate = kynurenate + L-glutamate + H2O. In terms of biological role, catalyzes the irreversible transamination of the L-tryptophan metabolite L-kynurenine to form kynurenic acid (KA). As a member of the malate-aspartate shuttle, it has a key role in the intracellular NAD(H) redox balance. Is important for metabolite exchange between mitochondria and cytosol, and for amino acid metabolism. Facilitates cellular uptake of long-chain free fatty acids. The protein is Aspartate aminotransferase, mitochondrial of Homo sapiens (Human).